Reading from the N-terminus, the 168-residue chain is CASP-like protein 1U1 (168 aa).

Over 1–6 the chain is Cytoplasmic; that stretch reads MDGAAR. A helical membrane pass occupies residues 7 to 27; it reads AVSLFFRIAVVGLSVAAAVVM. Residues 28–49 are Extracellular-facing; sequence ATASQAFPFNYGGAVSYTKYPA. Residues 50–70 traverse the membrane as a helical segment; sequence FVYFVVAAVVSAVCSAAALYL. At 71–80 the chain is on the cytoplasmic side; that stretch reads SVVREAAAGW. The chain crosses the membrane as a helical span at residues 81-101; it reads AVALLDVVTMGLLFSAAGAVF. Over 102–138 the chain is Extracellular; that stretch reads AVRRMAPLYLGVAGADTVAGRWVNGEFCHAAGAFCWR. A helical transmembrane segment spans residues 139-159; it reads VTTSAIICAFAAAAVSVAVLT. Over 160-168 the chain is Cytoplasmic; the sequence is KGARHRGKH.

This sequence belongs to the Casparian strip membrane proteins (CASP) family. Homodimer and heterodimers.

It localises to the cell membrane. The polypeptide is CASP-like protein 1U1 (Oryza sativa subsp. japonica (Rice)).